Consider the following 393-residue polypeptide: MGKSDFLTPKAIANRIKSKGLQKLRWYCQMCQKQCRDENGFKCHCMSESHQRQLLLASENPQQFMDYFSEEFRNDFLELLRRRFGTKRVHNNIVYNEYISHREHIHMNATQWETLTDFTKWLGREGLCKVDETPKGWYIQYIDRDPETIRRQLELEKKKKQDLDDEEKTAKFIEEQVRRGLEGKEQEVPTFTELSRENDEEKVTFNLSKGACSSSGATSSKSSTLGPSALKTIGSSASVKRKESSQSSTQSKEKKKKKSALDEIMEIEEEKKRTARTDYWLQPEIIVKIITKKLGEKYHKKKAIVKEVIDKYTAVVKMIDSGDKLKLDQTHLETVIPAPGKRILVLNGGYRGNEGTLESINEKTFSATIVIETGPLKGRRVEGIQYEDISKLA.

The C2H2-type zinc finger occupies 28–50; it reads CQMCQKQCRDENGFKCHCMSESH. The interval 51–160 is winged helix-turn-helix (wHTH); the sequence is QRQLLLASEN…RQLELEKKKK (110 aa). Residue lysine 135 is modified to N6,N6,N6-trimethyllysine; by METTL22; in vitro. Lysine 135 is subject to N6-methyllysine. Residues 147–180 adopt a coiled-coil conformation; that stretch reads ETIRRQLELEKKKKQDLDDEEKTAKFIEEQVRRG. Low complexity predominate over residues 209-224; that stretch reads KGACSSSGATSSKSST. The disordered stretch occupies residues 209-260; that stretch reads KGACSSSGATSSKSSTLGPSALKTIGSSASVKRKESSQSSTQSKEKKKKKSA. The stretch at 250–277 forms a coiled coil; it reads QSKEKKKKKSALDEIMEIEEEKKRTART. The interval 284–334 is C-terminal subdomain A; it reads EIIVKIITKKLGEKYHKKKAIVKEVIDKYTAVVKMIDSGDKLKLDQTHLET. Residues 340 to 391 form a C-terminal subdomain B region; sequence GKRILVLNGGYRGNEGTLESINEKTFSATIVIETGPLKGRRVEGIQYEDISK.

Belongs to the KIN17 family. Associated with DNA polymerase alpha, RFC1 and cyclin A, in multiprotein DNA replication complexes. Also associates with replication origins at the G1/S phase boundary and throughout the S phase in vivo. In terms of assembly, (Microbial infection) Interacts with SV40 large T antigen. Ubiquitously expressed in all tissues examined, with highest levels in skeletal muscle, heart and testis. Differentially expressed in non-tumorigenic and tumorigenic cell lines. Highly expressed in proliferating epithelial keratinocyte cells in vitro (at protein level).

It is found in the nucleus. Its subcellular location is the cytoplasm. Involved in DNA replication and the cellular response to DNA damage. May participate in DNA replication factories and create a bridge between DNA replication and repair mediated by high molecular weight complexes. May play a role in illegitimate recombination and regulation of gene expression. May participate in mRNA processing. Binds, in vitro, to double-stranded DNA. Also shown to bind preferentially to curved DNA in vitro and in vivo. Binds via its C-terminal domain to RNA in vitro. The protein is DNA/RNA-binding protein KIN17 of Homo sapiens (Human).